Here is a 238-residue protein sequence, read N- to C-terminus: Dolichyldiphosphatase 1 (238 aa).

Helical transmembrane passes span 33–53, 100–120, 130–150, and 162–182; these read LAYL…LIIF, PSSH…FLYL, FLDL…AFLV, and WSQV…WFIF.

Belongs to the dolichyldiphosphatase family.

The protein resides in the endoplasmic reticulum membrane. It catalyses the reaction a di-trans,poly-cis-dolichyl diphosphate + H2O = a di-trans,poly-cis-dolichyl phosphate + phosphate + H(+). Its pathway is protein modification; protein glycosylation. In terms of biological role, required for efficient N-glycosylation. Necessary for maintaining optimal levels of dolichol-linked oligosaccharides. Hydrolyzes dolichyl pyrophosphate at a very high rate and dolichyl monophosphate at a much lower rate. Does not act on phosphatidate. This chain is Dolichyldiphosphatase 1 (DOLPP1), found in Homo sapiens (Human).